The sequence spans 389 residues: tRNA(Met) cytidine acetate ligase (389 aa).

ATP is bound by residues 8–21 (IAEF…HEYL), Gly97, Asn153, and Arg176.

Belongs to the TmcAL family.

It localises to the cytoplasm. It carries out the reaction cytidine(34) in elongator tRNA(Met) + acetate + ATP = N(4)-acetylcytidine(34) in elongator tRNA(Met) + AMP + diphosphate. Functionally, catalyzes the formation of N(4)-acetylcytidine (ac(4)C) at the wobble position of elongator tRNA(Met), using acetate and ATP as substrates. First activates an acetate ion to form acetyladenylate (Ac-AMP) and then transfers the acetyl group to tRNA to form ac(4)C34. The protein is tRNA(Met) cytidine acetate ligase of Lactococcus lactis subsp. cremoris (strain SK11).